The primary structure comprises 262 residues: T-cell surface glycoprotein YE1/48 (262 aa).

The Cytoplasmic portion of the chain corresponds to Met-1–Lys-44. The helical; Signal-anchor for type II membrane protein transmembrane segment at Phe-45–Ile-66 threads the bilayer. Topologically, residues Lys-67 to His-262 are extracellular. Asn-86, Asn-103, and Asn-123 each carry an N-linked (GlcNAc...) asparagine glycan. The Cell attachment site signature appears at Arg-137–Asp-139. Residues Gly-138–Leu-257 enclose the C-type lectin domain. 4 cysteine pairs are disulfide-bonded: Cys-145/Cys-150, Cys-163/Cys-251, Cys-167/Cys-253, and Cys-232/Cys-245.

In terms of assembly, homodimer; disulfide-linked. High, in T-lymphoma lines, very low in normal lymphocytes.

The protein localises to the membrane. Receptor on natural killer (NK) cells for H-2d alleles. Inhibits the activity of NK cells thus preventing cell lysis. This Mus musculus (Mouse) protein is T-cell surface glycoprotein YE1/48 (Klra1).